The sequence spans 166 residues: Ribosome-binding factor A (166 aa).

The interval 119 to 166 (VQAQAKSGVYAGDEDPYVKPRVIGEDEDEDDEDGDDIDRSAPGYEPAH) is disordered. The segment covering 143-154 (EDEDEDDEDGDD) has biased composition (acidic residues).

Belongs to the RbfA family. Monomer. Binds 30S ribosomal subunits, but not 50S ribosomal subunits or 70S ribosomes.

Its subcellular location is the cytoplasm. One of several proteins that assist in the late maturation steps of the functional core of the 30S ribosomal subunit. Associates with free 30S ribosomal subunits (but not with 30S subunits that are part of 70S ribosomes or polysomes). Required for efficient processing of 16S rRNA. May interact with the 5'-terminal helix region of 16S rRNA. This is Ribosome-binding factor A from Clavibacter michiganensis subsp. michiganensis (strain NCPPB 382).